The chain runs to 150 residues: Transcriptional repressor NrdR (150 aa).

A zinc finger spans residues 3–34 (CPFCNFEESKVVDSRATDDNTTIRRRRECLNC). The 91-residue stretch at 49–139 (VLVVKKDLTR…VYRQFKDINT (91 aa)) folds into the ATP-cone domain.

Belongs to the NrdR family. The cofactor is Zn(2+).

Functionally, negatively regulates transcription of bacterial ribonucleotide reductase nrd genes and operons by binding to NrdR-boxes. The polypeptide is Transcriptional repressor NrdR (Clostridium botulinum (strain Alaska E43 / Type E3)).